The following is a 505-amino-acid chain: 2,3-bisphosphoglycerate-independent phosphoglycerate mutase (505 aa).

Mn(2+) is bound by residues aspartate 12 and serine 62. The Phosphoserine intermediate role is filled by serine 62. Residues histidine 123, arginine 153–aspartate 154, arginine 185, arginine 191, arginine 257–arginine 260, and lysine 330 each bind substrate. Mn(2+) contacts are provided by aspartate 397, histidine 401, aspartate 438, histidine 439, and histidine 456.

This sequence belongs to the BPG-independent phosphoglycerate mutase family. Monomer. Mn(2+) is required as a cofactor.

The enzyme catalyses (2R)-2-phosphoglycerate = (2R)-3-phosphoglycerate. Its pathway is carbohydrate degradation; glycolysis; pyruvate from D-glyceraldehyde 3-phosphate: step 3/5. Its function is as follows. Catalyzes the interconversion of 2-phosphoglycerate and 3-phosphoglycerate. The protein is 2,3-bisphosphoglycerate-independent phosphoglycerate mutase of Staphylococcus aureus (strain COL).